Consider the following 111-residue polypeptide: Putative carnobacteriocin-B2 immunity protein (111 aa).

Could impart immunity to carnobacteriocin-B2 to naturally sensitive host strains. The polypeptide is Putative carnobacteriocin-B2 immunity protein (Carnobacterium maltaromaticum (Carnobacterium piscicola)).